A 258-amino-acid polypeptide reads, in one-letter code: Imidazole glycerol phosphate synthase subunit HisF (258 aa).

Catalysis depends on residues Asp11 and Asp130.

It belongs to the HisA/HisF family. As to quaternary structure, heterodimer of HisH and HisF.

The protein localises to the cytoplasm. It catalyses the reaction 5-[(5-phospho-1-deoxy-D-ribulos-1-ylimino)methylamino]-1-(5-phospho-beta-D-ribosyl)imidazole-4-carboxamide + L-glutamine = D-erythro-1-(imidazol-4-yl)glycerol 3-phosphate + 5-amino-1-(5-phospho-beta-D-ribosyl)imidazole-4-carboxamide + L-glutamate + H(+). Its pathway is amino-acid biosynthesis; L-histidine biosynthesis; L-histidine from 5-phospho-alpha-D-ribose 1-diphosphate: step 5/9. Its function is as follows. IGPS catalyzes the conversion of PRFAR and glutamine to IGP, AICAR and glutamate. The HisF subunit catalyzes the cyclization activity that produces IGP and AICAR from PRFAR using the ammonia provided by the HisH subunit. The chain is Imidazole glycerol phosphate synthase subunit HisF from Shigella flexneri serotype 5b (strain 8401).